Consider the following 439-residue polypeptide: Diaminopimelate decarboxylase (439 aa).

Lysine 66 bears the N6-(pyridoxal phosphate)lysine mark. Pyridoxal 5'-phosphate-binding positions include glycine 248 and glutamate 290 to arginine 293. Substrate contacts are provided by arginine 293, arginine 330, and tyrosine 334. The Proton donor role is filled by cysteine 361. Substrate contacts are provided by glutamate 362 and tyrosine 390. Residue tyrosine 390 participates in pyridoxal 5'-phosphate binding.

This sequence belongs to the Orn/Lys/Arg decarboxylase class-II family. LysA subfamily. Homodimer. It depends on pyridoxal 5'-phosphate as a cofactor.

The enzyme catalyses meso-2,6-diaminopimelate + H(+) = L-lysine + CO2. The protein operates within amino-acid biosynthesis; L-lysine biosynthesis via DAP pathway; L-lysine from DL-2,6-diaminopimelate: step 1/1. Functionally, specifically catalyzes the decarboxylation of meso-diaminopimelate (meso-DAP) to L-lysine. In Bacillus subtilis (strain 168), this protein is Diaminopimelate decarboxylase.